The chain runs to 271 residues: Tetraspanin-11 (271 aa).

Residues 1–7 are Cytoplasmic-facing; that stretch reads MFRVSNF. Residues 8–28 traverse the membrane as a helical segment; that stretch reads MVGLANTLVMLVGASAIGYSI. The Extracellular portion of the chain corresponds to 29-44; the sequence is YMFVHQGVTDCESAIR. The helical transmembrane segment at 45–65 threads the bilayer; that stretch reads IPLLTTGLILFLVSLLGVIGS. Residues 66–76 are Cytoplasmic-facing; it reads CFKENLAMVSY. The chain crosses the membrane as a helical span at residues 77 to 97; that stretch reads LIILFGGIVALMIFSIFLFFV. Over 98 to 236 the chain is Extracellular; the sequence is TNKGAGRVVS…LANIREKWRN (139 aa). N-linked (GlcNAc...) asparagine glycans are attached at residues Asn185 and Asn195. The chain crosses the membrane as a helical span at residues 237 to 257; that stretch reads LLVFNICLLILLITVYSCGCC. At 258–271 the chain is on the cytoplasmic side; the sequence is ARRNNRTARKSDSV.

This sequence belongs to the tetraspanin (TM4SF) family.

Its subcellular location is the membrane. Its function is as follows. May be involved in the regulation of cell differentiation. This Arabidopsis thaliana (Mouse-ear cress) protein is Tetraspanin-11 (TET11).